Consider the following 361-residue polypeptide: Putative agmatine deiminase (361 aa).

The active-site Amidino-cysteine intermediate is Cys354.

It belongs to the agmatine deiminase family.

The catalysed reaction is agmatine + H2O = N-carbamoylputrescine + NH4(+). The protein is Putative agmatine deiminase of Streptococcus pneumoniae (strain Hungary19A-6).